Reading from the N-terminus, the 82-residue chain is Musculoskeletal embryonic nuclear protein 1 (82 aa).

2 disordered regions span residues 1 to 33 and 49 to 82; these read MSQAGAQEAPIKKKRPPVKDEDLKGARGNLTKN and QAGSAAPSVFSRTRTGTETVFEKPKAGPTKSVFG. Phosphoserine is present on S2. The Nuclear localization signal signature appears at 10 to 18; sequence PIKKKRPPV.

The protein belongs to the MUSTN1 family. As to expression, expression in skeletal muscle is reduced during limb unloading but increases during the active recovery phase that follows.

It localises to the nucleus. The protein localises to the cytoplasm. The protein resides in the secreted. It is found in the extracellular space. Its function is as follows. Required for chondrocyte development and proliferation. Plays a role in myoblast differentiation and fusion. Modulates skeletal muscle extracellular matrix composition. Plays a role in skeletal muscle function. Plays a role in glucose homeostasis. The chain is Musculoskeletal embryonic nuclear protein 1 (MUSTN1) from Homo sapiens (Human).